A 572-amino-acid polypeptide reads, in one-letter code: Proline--tRNA ligase (572 aa).

Belongs to the class-II aminoacyl-tRNA synthetase family. ProS type 1 subfamily. In terms of assembly, homodimer.

The protein resides in the cytoplasm. The enzyme catalyses tRNA(Pro) + L-proline + ATP = L-prolyl-tRNA(Pro) + AMP + diphosphate. Catalyzes the attachment of proline to tRNA(Pro) in a two-step reaction: proline is first activated by ATP to form Pro-AMP and then transferred to the acceptor end of tRNA(Pro). As ProRS can inadvertently accommodate and process non-cognate amino acids such as alanine and cysteine, to avoid such errors it has two additional distinct editing activities against alanine. One activity is designated as 'pretransfer' editing and involves the tRNA(Pro)-independent hydrolysis of activated Ala-AMP. The other activity is designated 'posttransfer' editing and involves deacylation of mischarged Ala-tRNA(Pro). The misacylated Cys-tRNA(Pro) is not edited by ProRS. The sequence is that of Proline--tRNA ligase from Cronobacter sakazakii (strain ATCC BAA-894) (Enterobacter sakazakii).